A 392-amino-acid polypeptide reads, in one-letter code: tRNA (guanine(26)-N(2)/guanine(27)-N(2))-dimethyltransferase (392 aa).

One can recognise a Trm1 methyltransferase domain in the interval 2-375 (EIVQEGIAKI…LSFEEVMKKM (374 aa)). Residues R36, R66, D84, E113, and A114 each contribute to the S-adenosyl-L-methionine site. Zn(2+) contacts are provided by C247, C250, C266, and C269.

Belongs to the class I-like SAM-binding methyltransferase superfamily. Trm1 family.

It catalyses the reaction guanosine(26)/guanosine(27) in tRNA + 4 S-adenosyl-L-methionine = N(2)-dimethylguanosine(26)/N(2)-dimethylguanosine(27) in tRNA + 4 S-adenosyl-L-homocysteine + 4 H(+). Its function is as follows. Dimethylates the guanine residues at position 26 and 27 of one or more tRNAs using S-adenosyl-L-methionine as donor of the methyl groups. The sequence is that of tRNA (guanine(26)-N(2)/guanine(27)-N(2))-dimethyltransferase from Aquifex aeolicus (strain VF5).